The following is a 210-amino-acid chain: Guanylate kinase (210 aa).

A Guanylate kinase-like domain is found at 8-188; the sequence is GNLFIIAAPS…SLASLEHIVL (181 aa). Position 15-22 (15-22) interacts with ATP; sequence APSGAGKS.

It belongs to the guanylate kinase family.

It localises to the cytoplasm. The catalysed reaction is GMP + ATP = GDP + ADP. Essential for recycling GMP and indirectly, cGMP. The protein is Guanylate kinase of Idiomarina loihiensis (strain ATCC BAA-735 / DSM 15497 / L2-TR).